The following is a 487-amino-acid chain: Protein nucleotidyltransferase YdiU (487 aa).

ATP-binding residues include Gly-86, Gly-88, Arg-89, Lys-109, Asp-121, Gly-122, Arg-172, and Arg-179. Asp-248 (proton acceptor) is an active-site residue. 2 residues coordinate Mg(2+): Asn-249 and Asp-258. Asp-258 is an ATP binding site.

The protein belongs to the SELO family. It depends on Mg(2+) as a cofactor. The cofactor is Mn(2+).

It catalyses the reaction L-seryl-[protein] + ATP = 3-O-(5'-adenylyl)-L-seryl-[protein] + diphosphate. The enzyme catalyses L-threonyl-[protein] + ATP = 3-O-(5'-adenylyl)-L-threonyl-[protein] + diphosphate. The catalysed reaction is L-tyrosyl-[protein] + ATP = O-(5'-adenylyl)-L-tyrosyl-[protein] + diphosphate. It carries out the reaction L-histidyl-[protein] + UTP = N(tele)-(5'-uridylyl)-L-histidyl-[protein] + diphosphate. It catalyses the reaction L-seryl-[protein] + UTP = O-(5'-uridylyl)-L-seryl-[protein] + diphosphate. The enzyme catalyses L-tyrosyl-[protein] + UTP = O-(5'-uridylyl)-L-tyrosyl-[protein] + diphosphate. Its function is as follows. Nucleotidyltransferase involved in the post-translational modification of proteins. It can catalyze the addition of adenosine monophosphate (AMP) or uridine monophosphate (UMP) to a protein, resulting in modifications known as AMPylation and UMPylation. The protein is Protein nucleotidyltransferase YdiU of Sphingopyxis alaskensis (strain DSM 13593 / LMG 18877 / RB2256) (Sphingomonas alaskensis).